The primary structure comprises 345 residues: Erythronate-4-phosphate dehydrogenase (345 aa).

S45 provides a ligand contact to substrate. NAD(+) is bound by residues D146 and T174. R207 is a catalytic residue. An NAD(+)-binding site is contributed by D227. E232 is an active-site residue. Catalysis depends on H249, which acts as the Proton donor. G252 provides a ligand contact to NAD(+).

Belongs to the D-isomer specific 2-hydroxyacid dehydrogenase family. PdxB subfamily. In terms of assembly, homodimer.

It is found in the cytoplasm. It carries out the reaction 4-phospho-D-erythronate + NAD(+) = (R)-3-hydroxy-2-oxo-4-phosphooxybutanoate + NADH + H(+). It functions in the pathway cofactor biosynthesis; pyridoxine 5'-phosphate biosynthesis; pyridoxine 5'-phosphate from D-erythrose 4-phosphate: step 2/5. In terms of biological role, catalyzes the oxidation of erythronate-4-phosphate to 3-hydroxy-2-oxo-4-phosphonooxybutanoate. The sequence is that of Erythronate-4-phosphate dehydrogenase from Ruthia magnifica subsp. Calyptogena magnifica.